The following is a 227-amino-acid chain: Cytochrome c oxidase subunit 2 (227 aa).

Residues 1 to 14 are Mitochondrial intermembrane-facing; sequence MAYPFQLGLQDATS. The chain crosses the membrane as a helical span at residues 15 to 45; it reads PIMEELTSFHDHTLMIVFLISSLVLYIILLM. Residues 46 to 59 are Mitochondrial matrix-facing; that stretch reads LTTKLTHTSTMDAQ. Residues 60-87 traverse the membrane as a helical segment; that stretch reads EVETIWTILPAVILILIALPSLRILYMM. The Mitochondrial intermembrane segment spans residues 88 to 227; that stretch reads DEINNPALTV…HFENWSASMI (140 aa). Cu cation-binding residues include His161, Cys196, Glu198, Cys200, His204, and Met207. A Mg(2+)-binding site is contributed by Glu198.

Belongs to the cytochrome c oxidase subunit 2 family. Component of the cytochrome c oxidase (complex IV, CIV), a multisubunit enzyme composed of 14 subunits. The complex is composed of a catalytic core of 3 subunits MT-CO1, MT-CO2 and MT-CO3, encoded in the mitochondrial DNA, and 11 supernumerary subunits COX4I, COX5A, COX5B, COX6A, COX6B, COX6C, COX7A, COX7B, COX7C, COX8 and NDUFA4, which are encoded in the nuclear genome. The complex exists as a monomer or a dimer and forms supercomplexes (SCs) in the inner mitochondrial membrane with NADH-ubiquinone oxidoreductase (complex I, CI) and ubiquinol-cytochrome c oxidoreductase (cytochrome b-c1 complex, complex III, CIII), resulting in different assemblies (supercomplex SCI(1)III(2)IV(1) and megacomplex MCI(2)III(2)IV(2)). Found in a complex with TMEM177, COA6, COX18, COX20, SCO1 and SCO2. Interacts with TMEM177 in a COX20-dependent manner. Interacts with COX20. Interacts with COX16. It depends on Cu cation as a cofactor.

Its subcellular location is the mitochondrion inner membrane. The catalysed reaction is 4 Fe(II)-[cytochrome c] + O2 + 8 H(+)(in) = 4 Fe(III)-[cytochrome c] + 2 H2O + 4 H(+)(out). Its function is as follows. Component of the cytochrome c oxidase, the last enzyme in the mitochondrial electron transport chain which drives oxidative phosphorylation. The respiratory chain contains 3 multisubunit complexes succinate dehydrogenase (complex II, CII), ubiquinol-cytochrome c oxidoreductase (cytochrome b-c1 complex, complex III, CIII) and cytochrome c oxidase (complex IV, CIV), that cooperate to transfer electrons derived from NADH and succinate to molecular oxygen, creating an electrochemical gradient over the inner membrane that drives transmembrane transport and the ATP synthase. Cytochrome c oxidase is the component of the respiratory chain that catalyzes the reduction of oxygen to water. Electrons originating from reduced cytochrome c in the intermembrane space (IMS) are transferred via the dinuclear copper A center (CU(A)) of subunit 2 and heme A of subunit 1 to the active site in subunit 1, a binuclear center (BNC) formed by heme A3 and copper B (CU(B)). The BNC reduces molecular oxygen to 2 water molecules using 4 electrons from cytochrome c in the IMS and 4 protons from the mitochondrial matrix. The chain is Cytochrome c oxidase subunit 2 (MT-CO2) from Anisomys imitator (Uneven-toothed rat).